Consider the following 275-residue polypeptide: Dermonecrotic toxin LhSicTox-alphaVI1ii (275 aa).

H5 is an active-site residue. Mg(2+) is bound by residues E25 and D27. H41 (nucleophile) is an active-site residue. 2 disulfide bridges follow: C45–C51 and C47–C192. Residue D85 coordinates Mg(2+).

Belongs to the arthropod phospholipase D family. Class II subfamily. Requires Mg(2+) as cofactor. As to expression, expressed by the venom gland.

It localises to the secreted. It catalyses the reaction an N-(acyl)-sphingosylphosphocholine = an N-(acyl)-sphingosyl-1,3-cyclic phosphate + choline. The catalysed reaction is an N-(acyl)-sphingosylphosphoethanolamine = an N-(acyl)-sphingosyl-1,3-cyclic phosphate + ethanolamine. It carries out the reaction a 1-acyl-sn-glycero-3-phosphocholine = a 1-acyl-sn-glycero-2,3-cyclic phosphate + choline. The enzyme catalyses a 1-acyl-sn-glycero-3-phosphoethanolamine = a 1-acyl-sn-glycero-2,3-cyclic phosphate + ethanolamine. Its function is as follows. Dermonecrotic toxins cleave the phosphodiester linkage between the phosphate and headgroup of certain phospholipids (sphingolipid and lysolipid substrates), forming an alcohol (often choline) and a cyclic phosphate. This toxin acts on sphingomyelin (SM). It may also act on ceramide phosphoethanolamine (CPE), lysophosphatidylcholine (LPC) and lysophosphatidylethanolamine (LPE), but not on lysophosphatidylserine (LPS), and lysophosphatidylglycerol (LPG). It acts by transphosphatidylation, releasing exclusively cyclic phosphate products as second products. Induces dermonecrosis, hemolysis, increased vascular permeability, edema, inflammatory response, and platelet aggregation. This chain is Dermonecrotic toxin LhSicTox-alphaVI1ii, found in Loxosceles hirsuta (Recluse spider).